Reading from the N-terminus, the 1409-residue chain is DNA-directed RNA polymerase subunit beta' (1409 aa).

Residues Cys70, Cys72, Cys85, and Cys88 each coordinate Zn(2+). The Mg(2+) site is built by Asp458, Asp460, and Asp462. Zn(2+)-binding residues include Cys813, Cys887, Cys894, and Cys897.

It belongs to the RNA polymerase beta' chain family. In terms of assembly, the RNAP catalytic core consists of 2 alpha, 1 beta, 1 beta' and 1 omega subunit. When a sigma factor is associated with the core the holoenzyme is formed, which can initiate transcription. Requires Mg(2+) as cofactor. Zn(2+) serves as cofactor.

It catalyses the reaction RNA(n) + a ribonucleoside 5'-triphosphate = RNA(n+1) + diphosphate. Its function is as follows. DNA-dependent RNA polymerase catalyzes the transcription of DNA into RNA using the four ribonucleoside triphosphates as substrates. The protein is DNA-directed RNA polymerase subunit beta' of Delftia acidovorans (strain DSM 14801 / SPH-1).